A 373-amino-acid chain; its full sequence is Anhydro-N-acetylmuramic acid kinase (373 aa).

An ATP-binding site is contributed by 13–20 (GTSMDGID).

It belongs to the anhydro-N-acetylmuramic acid kinase family.

It catalyses the reaction 1,6-anhydro-N-acetyl-beta-muramate + ATP + H2O = N-acetyl-D-muramate 6-phosphate + ADP + H(+). It functions in the pathway amino-sugar metabolism; 1,6-anhydro-N-acetylmuramate degradation. It participates in cell wall biogenesis; peptidoglycan recycling. Its function is as follows. Catalyzes the specific phosphorylation of 1,6-anhydro-N-acetylmuramic acid (anhMurNAc) with the simultaneous cleavage of the 1,6-anhydro ring, generating MurNAc-6-P. Is required for the utilization of anhMurNAc either imported from the medium or derived from its own cell wall murein, and thus plays a role in cell wall recycling. The chain is Anhydro-N-acetylmuramic acid kinase from Brucella suis (strain ATCC 23445 / NCTC 10510).